The sequence spans 351 residues: Autoinducer 2 import system permease protein LsrC (351 aa).

Helical transmembrane passes span 14–34 (LLAI…YFSL), 39–59 (MIFS…LVML), 70–90 (ITGL…GLAA), 93–113 (LFAL…VTWL), 115–135 (IPAI…MLLL), 155–175 (ILFS…AMAW), 213–233 (MNGV…GFIP), 252–272 (GISL…AFLL), and 284–304 (LPAW…LVFD).

The protein belongs to the binding-protein-dependent transport system permease family. AraH/RbsC subfamily. As to quaternary structure, the complex is composed of two ATP-binding proteins (LsrA), two transmembrane proteins (LsrC and LsrD) and a solute-binding protein (LsrB).

The protein resides in the cell inner membrane. Functionally, part of the ABC transporter complex LsrABCD involved in autoinducer 2 (AI-2) import. Probably responsible for the translocation of the substrate across the membrane. The polypeptide is Autoinducer 2 import system permease protein LsrC (lsrC) (Yersinia pestis bv. Antiqua (strain Antiqua)).